The sequence spans 206 residues: Bacterial microcompartment protein trimer-3 (206 aa).

BMC circularly permuted domains are found at residues 2–104 (ELRA…RLAP) and 105–206 (RVVS…DNRG). The Pore gating residues motif lies at 67–68 (ER).

This sequence belongs to the EutL/PduB family. As to quaternary structure, homotrimerizes to form a pseudohexamer. These stack, with the concave faces together, with the concave faces together, in purified bacterial microcompartments (BMC).

It is found in the bacterial microcompartment. Functionally, a minor component of the bacterial microcompartment (BMC) shell. Expression of 5 proteins in E.coli (BMC-H (Hoch_5815), BMC-P (Hoch_5814), and 3 BMC-T (Hoch_5812, Hoch_5816, Hoch_3341)) forms 40 nm artificial BMCs with a molecular mass of 6.5 MDa. One of 2 stacked pseudohexamers in the BMC. There are 20 BMC-T pseudohexamers per BMC, composed of mixed BMC-T1, BMC-T2 and BMC-T3. The shell facets are 20-30 Angstroms thick, with 1 of the stacked BMC-T trimers protruding to the exterior. The stacked trimers may serve as conduits to allow metabolite flux across the protein shell, gated by Arg-68 which contacts Glu-67 in an adjacent subunit; they are flexible enough to play a role in accommodating variations in shell assembly. The sequence is that of Bacterial microcompartment protein trimer-3 from Haliangium ochraceum (strain DSM 14365 / JCM 11303 / SMP-2).